Reading from the N-terminus, the 576-residue chain is Arginine--tRNA ligase (576 aa).

A 'HIGH' region motif is present at residues Pro122–His132.

The protein belongs to the class-I aminoacyl-tRNA synthetase family. As to quaternary structure, monomer.

It is found in the cytoplasm. It catalyses the reaction tRNA(Arg) + L-arginine + ATP = L-arginyl-tRNA(Arg) + AMP + diphosphate. The protein is Arginine--tRNA ligase of Pectobacterium atrosepticum (strain SCRI 1043 / ATCC BAA-672) (Erwinia carotovora subsp. atroseptica).